We begin with the raw amino-acid sequence, 438 residues long: Trigger factor (438 aa).

The PPIase FKBP-type domain maps to 160–245 (DDKVTIDFVG…VKKIQQAELP (86 aa)).

Belongs to the FKBP-type PPIase family. Tig subfamily.

Its subcellular location is the cytoplasm. It catalyses the reaction [protein]-peptidylproline (omega=180) = [protein]-peptidylproline (omega=0). Functionally, involved in protein export. Acts as a chaperone by maintaining the newly synthesized protein in an open conformation. Functions as a peptidyl-prolyl cis-trans isomerase. The polypeptide is Trigger factor (Francisella tularensis subsp. holarctica (strain OSU18)).